The chain runs to 311 residues: HPr kinase/phosphorylase (311 aa).

Catalysis depends on residues His138 and Lys159. Residue 153 to 160 participates in ATP binding; sequence GDSGIGKS. Ser160 contacts Mg(2+). Asp177 (proton acceptor; for phosphorylation activity. Proton donor; for dephosphorylation activity) is an active-site residue. The important for the catalytic mechanism of both phosphorylation and dephosphorylation stretch occupies residues 201–210; sequence IEIRGVGIID. Glu202 contributes to the Mg(2+) binding site. Residue Arg243 is part of the active site. Residues 264 to 269 are important for the catalytic mechanism of dephosphorylation; sequence PVKTGR.

Belongs to the HPrK/P family. Homohexamer. Requires Mg(2+) as cofactor.

The enzyme catalyses [HPr protein]-L-serine + ATP = [HPr protein]-O-phospho-L-serine + ADP + H(+). It catalyses the reaction [HPr protein]-O-phospho-L-serine + phosphate + H(+) = [HPr protein]-L-serine + diphosphate. Its function is as follows. Catalyzes the ATP- as well as the pyrophosphate-dependent phosphorylation of a specific serine residue in HPr, a phosphocarrier protein of the phosphoenolpyruvate-dependent sugar phosphotransferase system (PTS). HprK/P also catalyzes the pyrophosphate-producing, inorganic phosphate-dependent dephosphorylation (phosphorolysis) of seryl-phosphorylated HPr (P-Ser-HPr). The two antagonistic activities of HprK/P are regulated by several intracellular metabolites, which change their concentration in response to the absence or presence of rapidly metabolisable carbon sources (glucose, fructose, etc.) in the growth medium. Therefore, by controlling the phosphorylation state of HPr, HPrK/P is a sensor enzyme that plays a major role in the regulation of carbon metabolism and sugar transport: it mediates carbon catabolite repression (CCR), and regulates PTS-catalyzed carbohydrate uptake and inducer exclusion. This Streptococcus pneumoniae serotype 2 (strain D39 / NCTC 7466) protein is HPr kinase/phosphorylase.